The sequence spans 439 residues: Ornithine aminotransferase, mitochondrial (439 aa).

The N-terminal 35 residues, 1-35 (MLSKLASLQTVAALRRGLRTSVASATSVATKKTEQ), are a transit peptide targeting the mitochondrion. K49 and K66 each carry N6-acetyllysine. K102 bears the N6-succinyllysine mark. At K107 the chain carries N6-acetyllysine; alternate. N6-succinyllysine; alternate is present on K107. K292 bears the N6-(pyridoxal phosphate)lysine mark. K362 is subject to N6-acetyllysine; alternate. K362 carries the post-translational modification N6-succinyllysine; alternate. N6-acetyllysine is present on residues K386 and K392. The residue at position 405 (K405) is an N6-acetyllysine; alternate. Residue K405 is modified to N6-succinyllysine; alternate. The residue at position 421 (K421) is an N6-acetyllysine.

Homohexamer. Pyridoxal 5'-phosphate is required as a cofactor. In terms of tissue distribution, expressed in the head and flagellum of epididymal sperm but not in testicular sperm (at protein level).

It is found in the mitochondrion matrix. The catalysed reaction is L-ornithine + 2-oxoglutarate = L-glutamate 5-semialdehyde + L-glutamate. The protein operates within amino-acid biosynthesis; L-proline biosynthesis; L-glutamate 5-semialdehyde from L-ornithine: step 1/1. Catalyzes the reversible interconversion of L-ornithine and 2-oxoglutarate to L-glutamate semialdehyde and L-glutamate. In Rattus norvegicus (Rat), this protein is Ornithine aminotransferase, mitochondrial (Oat).